A 435-amino-acid polypeptide reads, in one-letter code: Antho-RFamide neuropeptides type 1 (435 aa).

Positions 1-22 (MTTVSYVTILLTVLVQVLTSDA) are cleaved as a signal peptide. The propeptide occupies 23-193 (KATNNKRELS…SVPGRYGREL (171 aa)). Pyrrolidone carboxylic acid is present on Q194. Residue F197 is modified to Phenylalanine amide. Positions 199–201 (REL) are excised as a propeptide. At F205 the chain carries Phenylalanine amide. The propeptide occupies 207–209 (REA). F213 is modified (phenylalanine amide). Positions 215 to 217 (REL) are excised as a propeptide. F221 carries the post-translational modification Phenylalanine amide. Positions 223–225 (REF) are excised as a propeptide. F229 bears the Phenylalanine amide mark. The span at 230-371 (GREDQGRFGR…EDIAEADQGR (142 aa)) shows a compositional bias: basic and acidic residues. Disordered stretches follow at residues 230–374 (GRED…RFGR) and 386–435 (AKKR…AKTS). Residues 231–233 (RED) constitute a propeptide that is removed on maturation. F237 is subject to Phenylalanine amide. Residues 239–241 (RED) constitute a propeptide that is removed on maturation. F245 bears the Phenylalanine amide mark. Positions 247-249 (RED) are excised as a propeptide. The residue at position 253 (F253) is a Phenylalanine amide. Positions 255-257 (RED) are excised as a propeptide. Position 261 is a phenylalanine amide (F261). Positions 263–265 (RED) are excised as a propeptide. F269 carries the phenylalanine amide modification. Positions 271–273 (RED) are excised as a propeptide. F277 is subject to Phenylalanine amide. The propeptide occupies 279 to 281 (REL). F285 bears the Phenylalanine amide mark. Positions 287 to 289 (REF) are excised as a propeptide. F293 carries the post-translational modification Phenylalanine amide. Positions 295–297 (RED) are excised as a propeptide. F301 is modified (phenylalanine amide). Residues 303-305 (RED) constitute a propeptide that is removed on maturation. Phenylalanine amide is present on F309. Residues 311–313 (REL) constitute a propeptide that is removed on maturation. Phenylalanine amide is present on F317. Positions 319-321 (RED) are excised as a propeptide. At F325 the chain carries Phenylalanine amide. Residues 327 to 329 (RED) constitute a propeptide that is removed on maturation. F333 carries the phenylalanine amide modification. The propeptide occupies 335–342 (REDLAKED). A Phenylalanine amide modification is found at F346. The propeptide occupies 348-355 (REDLAKED). Phenylalanine amide is present on F359. Positions 361 to 368 (REDIAEAD) are excised as a propeptide. F372 carries the post-translational modification Phenylalanine amide. Residues 374–435 (RNAAAAAAAA…KSDDALAKTS (62 aa)) constitute a propeptide that is removed on maturation. The segment covering 398 to 435 (SDPKPQTRFRDGKDMQEKRKVEKKDKIEKSDDALAKTS) has biased composition (basic and acidic residues).

The protein belongs to the FARP (FMRFamide related peptide) family.

Its subcellular location is the secreted. In terms of biological role, not known but it could act as a transmitter at neuromuscular synapses. This Anthopleura elegantissima (Green aggregating anemone) protein is Antho-RFamide neuropeptides type 1.